Here is a 972-residue protein sequence, read N- to C-terminus: Glycine dehydrogenase (decarboxylating) (972 aa).

Lysine 713 is subject to N6-(pyridoxal phosphate)lysine.

Belongs to the GcvP family. The glycine cleavage system is composed of four proteins: P, T, L and H. Requires pyridoxal 5'-phosphate as cofactor.

It carries out the reaction N(6)-[(R)-lipoyl]-L-lysyl-[glycine-cleavage complex H protein] + glycine + H(+) = N(6)-[(R)-S(8)-aminomethyldihydrolipoyl]-L-lysyl-[glycine-cleavage complex H protein] + CO2. Its function is as follows. The glycine cleavage system catalyzes the degradation of glycine. The P protein binds the alpha-amino group of glycine through its pyridoxal phosphate cofactor; CO(2) is released and the remaining methylamine moiety is then transferred to the lipoamide cofactor of the H protein. This is Glycine dehydrogenase (decarboxylating) from Aromatoleum aromaticum (strain DSM 19018 / LMG 30748 / EbN1) (Azoarcus sp. (strain EbN1)).